The primary structure comprises 494 residues: Probable malate:quinone oxidoreductase (494 aa).

The protein belongs to the MQO family. It depends on FAD as a cofactor.

The enzyme catalyses (S)-malate + a quinone = a quinol + oxaloacetate. The protein operates within carbohydrate metabolism; tricarboxylic acid cycle; oxaloacetate from (S)-malate (quinone route): step 1/1. In Helicobacter hepaticus (strain ATCC 51449 / 3B1), this protein is Probable malate:quinone oxidoreductase.